Consider the following 463-residue polypeptide: ATP-dependent protease ATPase subunit HslU (463 aa).

ATP-binding positions include Val-19, 61 to 66, Asp-277, Glu-341, and Arg-413; that span reads GVGKTE.

Belongs to the ClpX chaperone family. HslU subfamily. As to quaternary structure, a double ring-shaped homohexamer of HslV is capped on each side by a ring-shaped HslU homohexamer. The assembly of the HslU/HslV complex is dependent on binding of ATP.

It is found in the cytoplasm. Functionally, ATPase subunit of a proteasome-like degradation complex; this subunit has chaperone activity. The binding of ATP and its subsequent hydrolysis by HslU are essential for unfolding of protein substrates subsequently hydrolyzed by HslV. HslU recognizes the N-terminal part of its protein substrates and unfolds these before they are guided to HslV for hydrolysis. The chain is ATP-dependent protease ATPase subunit HslU from Shouchella clausii (strain KSM-K16) (Alkalihalobacillus clausii).